The following is a 405-amino-acid chain: 4-hydroxy-3-methylbut-2-en-1-yl diphosphate synthase (flavodoxin) (405 aa).

Residues C297, C300, C343, and E350 each coordinate [4Fe-4S] cluster.

It belongs to the IspG family. It depends on [4Fe-4S] cluster as a cofactor.

The enzyme catalyses (2E)-4-hydroxy-3-methylbut-2-enyl diphosphate + oxidized [flavodoxin] + H2O + 2 H(+) = 2-C-methyl-D-erythritol 2,4-cyclic diphosphate + reduced [flavodoxin]. It participates in isoprenoid biosynthesis; isopentenyl diphosphate biosynthesis via DXP pathway; isopentenyl diphosphate from 1-deoxy-D-xylulose 5-phosphate: step 5/6. Its function is as follows. Converts 2C-methyl-D-erythritol 2,4-cyclodiphosphate (ME-2,4cPP) into 1-hydroxy-2-methyl-2-(E)-butenyl 4-diphosphate. This chain is 4-hydroxy-3-methylbut-2-en-1-yl diphosphate synthase (flavodoxin), found in Francisella tularensis subsp. mediasiatica (strain FSC147).